The following is a 75-amino-acid chain: Stewaprin-a (75 aa).

The N-terminal stretch at 1-24 (MSSGGLLLLLGLLTLWAELIPVSG) is a signal peptide. Positions 27–72 (HPKKPGLCPPRPQKPPCVRECKNDWSCPGEQKCCRYGCIFECRDPI) constitute a WAP domain. 4 disulfide bridges follow: Cys-34–Cys-60, Cys-43–Cys-64, Cys-47–Cys-59, and Cys-53–Cys-68.

The protein belongs to the venom waprin family. As to expression, expressed by the venom gland.

It is found in the secreted. Its function is as follows. Damages membranes of susceptible bacteria. Has no hemolytic activity. Not toxic to mice. Does not inhibit the proteinases elastase and cathepsin G. The chain is Stewaprin-a from Hoplocephalus stephensii (Stephens's banded snake).